A 201-amino-acid chain; its full sequence is dITP/XTP pyrophosphatase (201 aa).

Residue 8–13 (TNNENK) coordinates substrate. The Mg(2+) site is built by glutamate 41 and aspartate 73. The Proton acceptor role is filled by aspartate 73. Substrate contacts are provided by residues serine 74, 154–157 (FGYD), lysine 177, and 182–183 (HR).

This sequence belongs to the HAM1 NTPase family. In terms of assembly, homodimer. Mg(2+) serves as cofactor.

It catalyses the reaction XTP + H2O = XMP + diphosphate + H(+). It carries out the reaction dITP + H2O = dIMP + diphosphate + H(+). The catalysed reaction is ITP + H2O = IMP + diphosphate + H(+). Pyrophosphatase that catalyzes the hydrolysis of nucleoside triphosphates to their monophosphate derivatives, with a high preference for the non-canonical purine nucleotides XTP (xanthosine triphosphate), dITP (deoxyinosine triphosphate) and ITP. Seems to function as a house-cleaning enzyme that removes non-canonical purine nucleotides from the nucleotide pool, thus preventing their incorporation into DNA/RNA and avoiding chromosomal lesions. This is dITP/XTP pyrophosphatase from Clostridium tetani (strain Massachusetts / E88).